The chain runs to 275 residues: Light-independent protochlorophyllide reductase iron-sulfur ATP-binding protein (275 aa).

Residues 12–17 and Lys41 contribute to the ATP site; that span reads GIGKST. Ser16 is a binding site for Mg(2+). 2 residues coordinate [4Fe-4S] cluster: Cys97 and Cys131. 182 to 183 is a binding site for ATP; sequence NR.

Belongs to the NifH/BchL/ChlL family. As to quaternary structure, homodimer. Protochlorophyllide reductase is composed of three subunits; BchL, BchN and BchB. [4Fe-4S] cluster serves as cofactor.

It carries out the reaction chlorophyllide a + oxidized 2[4Fe-4S]-[ferredoxin] + 2 ADP + 2 phosphate = protochlorophyllide a + reduced 2[4Fe-4S]-[ferredoxin] + 2 ATP + 2 H2O. Its pathway is porphyrin-containing compound metabolism; bacteriochlorophyll biosynthesis (light-independent). In terms of biological role, component of the dark-operative protochlorophyllide reductase (DPOR) that uses Mg-ATP and reduced ferredoxin to reduce ring D of protochlorophyllide (Pchlide) to form chlorophyllide a (Chlide). This reaction is light-independent. The L component serves as a unique electron donor to the NB-component of the complex, and binds Mg-ATP. The protein is Light-independent protochlorophyllide reductase iron-sulfur ATP-binding protein of Chlorobium phaeobacteroides (strain DSM 266 / SMG 266 / 2430).